The following is a 485-amino-acid chain: Inosine-5'-monophosphate dehydrogenase (485 aa).

CBS domains lie at 99-154 and 156-212; these read IVED…TVKE and MTRE…KNAV. Residues Asp247 and 294–296 each bind NAD(+); that span reads GIG. Gly296 and Gly298 together coordinate K(+). Residue Ser299 coordinates IMP. Cys301 contacts K(+). Residue Cys301 is the Thioimidate intermediate of the active site. Residues 334–336, 357–358, and 381–385 each bind IMP; these read DGG, GN, and YRGMG. The Proton acceptor role is filled by Arg397. An IMP-binding site is contributed by Glu412. K(+) is bound by residues Glu466, Ser467, and His468.

The protein belongs to the IMPDH/GMPR family. In terms of assembly, homotetramer. The cofactor is K(+).

The enzyme catalyses IMP + NAD(+) + H2O = XMP + NADH + H(+). The protein operates within purine metabolism; XMP biosynthesis via de novo pathway; XMP from IMP: step 1/1. Mycophenolic acid (MPA) is a non-competitive inhibitor that prevents formation of the closed enzyme conformation by binding to the same site as the amobile flap. In contrast, mizoribine monophosphate (MZP) is a competitive inhibitor that induces the closed conformation. MPA is a potent inhibitor of mammalian IMPDHs but a poor inhibitor of the bacterial enzymes. MZP is a more potent inhibitor of bacterial IMPDH. Its function is as follows. Catalyzes the conversion of inosine 5'-phosphate (IMP) to xanthosine 5'-phosphate (XMP), the first committed and rate-limiting step in the de novo synthesis of guanine nucleotides, and therefore plays an important role in the regulation of cell growth. The sequence is that of Inosine-5'-monophosphate dehydrogenase from Pyrococcus furiosus (strain ATCC 43587 / DSM 3638 / JCM 8422 / Vc1).